The primary structure comprises 268 residues: Putative hydro-lyase ABAYE2440 (268 aa).

Belongs to the D-glutamate cyclase family.

The sequence is that of Putative hydro-lyase ABAYE2440 from Acinetobacter baumannii (strain AYE).